The following is a 409-amino-acid chain: uncharacterized protein (409 aa).

4 helical membrane passes run 20-40 (ILTMLGVIIGIAAIIAIVSML), 283-303 (FALLLGGIASISLLVGGIGVM), 344-364 (IGGILGVLAGFGIAKLLTVIF), and 372-392 (IPAVVGALIFSMAVGIIFGLL).

This sequence belongs to the ABC-4 integral membrane protein family.

The protein localises to the cell membrane. This is an uncharacterized protein from Bacillus subtilis (strain 168).